Consider the following 150-residue polypeptide: NADH-quinone oxidoreductase subunit A (150 aa).

3 helical membrane-spanning segments follow: residues 14–34 (WAFA…LLGA), 70–90 (LVAM…AWAV), and 98–118 (LGFI…FYLV).

Belongs to the complex I subunit 3 family. In terms of assembly, NDH-1 is composed of 13 different subunits. Subunits NuoA, H, J, K, L, M, N constitute the membrane sector of the complex.

Its subcellular location is the cell inner membrane. It catalyses the reaction a quinone + NADH + 5 H(+)(in) = a quinol + NAD(+) + 4 H(+)(out). Its function is as follows. NDH-1 shuttles electrons from NADH, via FMN and iron-sulfur (Fe-S) centers, to quinones in the respiratory chain. The immediate electron acceptor for the enzyme in this species is believed to be ubiquinone. Couples the redox reaction to proton translocation (for every two electrons transferred, four hydrogen ions are translocated across the cytoplasmic membrane), and thus conserves the redox energy in a proton gradient. In Proteus mirabilis (strain HI4320), this protein is NADH-quinone oxidoreductase subunit A.